Reading from the N-terminus, the 264-residue chain is Thymidylate synthase (264 aa).

Arginine 21 provides a ligand contact to dUMP. Residue histidine 51 participates in (6R)-5,10-methylene-5,6,7,8-tetrahydrofolate binding. 126-127 (RR) serves as a coordination point for dUMP. Cysteine 146 functions as the Nucleophile in the catalytic mechanism. DUMP is bound by residues 166 to 169 (RSCD), asparagine 177, and 207 to 209 (HLY). Aspartate 169 serves as a coordination point for (6R)-5,10-methylene-5,6,7,8-tetrahydrofolate. Alanine 263 is a (6R)-5,10-methylene-5,6,7,8-tetrahydrofolate binding site.

Belongs to the thymidylate synthase family. Bacterial-type ThyA subfamily. As to quaternary structure, homodimer.

Its subcellular location is the cytoplasm. The enzyme catalyses dUMP + (6R)-5,10-methylene-5,6,7,8-tetrahydrofolate = 7,8-dihydrofolate + dTMP. It functions in the pathway pyrimidine metabolism; dTTP biosynthesis. Its function is as follows. Catalyzes the reductive methylation of 2'-deoxyuridine-5'-monophosphate (dUMP) to 2'-deoxythymidine-5'-monophosphate (dTMP) while utilizing 5,10-methylenetetrahydrofolate (mTHF) as the methyl donor and reductant in the reaction, yielding dihydrofolate (DHF) as a by-product. This enzymatic reaction provides an intracellular de novo source of dTMP, an essential precursor for DNA biosynthesis. The chain is Thymidylate synthase from Shigella flexneri serotype 5b (strain 8401).